A 1823-amino-acid polypeptide reads, in one-letter code: WD repeat-containing protein DDB_G0292056 (1823 aa).

The interval 1–68 (MTYNNNNNYL…IGNSSGGGGV (68 aa)) is disordered. The span at 16-61 (TSTSTSTSTSTPTSTKTSPLNTSSSSNILKSNSRNPSPNNPTNIGN) shows a compositional bias: low complexity. WD repeat units follow at residues 138–177 (QSKWEVGVVDWNSQSPNLVASSSNQDTFIWDIENPKYPLL), 182–222 (SHQR…KAVK), 228–267 (SHILGAIQVKWNRFNSNVLASAHESYLMIWDIRKDSQELN), 270–310 (VHSA…PKST), 312–354 (ITSN…YSTP), and 360–405 (GHTD…KDLF). 9 disordered regions span residues 418-461 (PTTT…LLST), 530-562 (QPDDDNNNNNLNNLNNNNNTQDNIDNNDDNNNN), 649-687 (NITETNNNNNNHNNSVQNNNNNNNNNNNNNNNSGGGFLK), 714-778 (IDIS…YRPG), 805-840 (ILTNLNNNSNNNSGSGGGGSSNMNASITTSTTTNDQ), 883-940 (IPNN…SSTS), 966-996 (SSSSSISDTTNNTSNTTQNIQNTTKNINPPR), 1014-1058 (NNIT…NDNP), and 1122-1186 (QQLV…NGKS). Composition is skewed to low complexity over residues 419–432 (TTTTTTTTATTTTT) and 440–461 (LNESTDNNNNTNSLNSSTLLST). 2 stretches are compositionally biased toward low complexity: residues 654 to 680 (NNNNNNHNNSVQNNNNNNNNNNNNNNN) and 717 to 748 (SQQQQQQQQQQAATTSTSSSSSSSSNTQQQQQ). Polar residues-rich tracts occupy residues 749 to 768 (FLTATVSNKGGTVLSKSPTS) and 827 to 840 (MNASITTSTTTNDQ). Low complexity-rich tracts occupy residues 885 to 926 (NNNK…SSNN), 966 to 993 (SSSSSISDTTNNTSNTTQNIQNTTKNIN), 1014 to 1041 (NNITGNNNINSNSNTTNNLTSPNPNRLN), and 1127 to 1183 (SSSP…NNGN). Residues 1207-1250 (ANSYILSGKPVEEICKYNSELAEKENRKDLVKLWNTLGMITDSK) form a WD 7 repeat. Disordered regions lie at residues 1264–1307 (SHFG…LHQS), 1697–1725 (QQQPQHYQQHRHSMSGTSHYHQQQPHTHN), and 1764–1823 (PQQE…MFSN). Over residues 1282-1293 (STGIASSTGSNS) the composition is skewed to low complexity. A compositionally biased stretch (polar residues) spans 1710–1725 (MSGTSHYHQQQPHTHN).

This chain is WD repeat-containing protein DDB_G0292056, found in Dictyostelium discoideum (Social amoeba).